A 314-amino-acid chain; its full sequence is Methionyl-tRNA formyltransferase (314 aa).

111–114 (SLLP) contributes to the (6S)-5,6,7,8-tetrahydrofolate binding site.

The protein belongs to the Fmt family.

The catalysed reaction is L-methionyl-tRNA(fMet) + (6R)-10-formyltetrahydrofolate = N-formyl-L-methionyl-tRNA(fMet) + (6S)-5,6,7,8-tetrahydrofolate + H(+). Attaches a formyl group to the free amino group of methionyl-tRNA(fMet). The formyl group appears to play a dual role in the initiator identity of N-formylmethionyl-tRNA by promoting its recognition by IF2 and preventing the misappropriation of this tRNA by the elongation apparatus. This chain is Methionyl-tRNA formyltransferase, found in Chlorobium luteolum (strain DSM 273 / BCRC 81028 / 2530) (Pelodictyon luteolum).